We begin with the raw amino-acid sequence, 1044 residues long: Eukaryotic translation initiation factor 3 subunit A (1044 aa).

A coiled-coil region spans residues 92–121 (LKKFIELAEKKVTEAQAKADEIQSSLESAA). A PCI domain is found at 339–523 (MTKAASFVLL…GVLTFDTDIF (185 aa)). The stretch at 611 to 907 (IDKKKEAATD…EARRAARKAG (297 aa)) forms a coiled coil. A compositionally biased stretch (basic and acidic residues) spans 797–901 (SEKRHEEFEK…QREEEAEARR (105 aa)). Residues 797 to 1044 (SEKRHEEFEK…WVPRWKQQQS (248 aa)) are disordered. Low complexity-rich tracts occupy residues 943 to 956 (KEAA…AAPA) and 1006 to 1017 (SSSSQPPSRTQT).

Belongs to the eIF-3 subunit A family. In terms of assembly, component of the eukaryotic translation initiation factor 3 (eIF-3) complex.

The protein localises to the cytoplasm. RNA-binding component of the eukaryotic translation initiation factor 3 (eIF-3) complex, which is involved in protein synthesis of a specialized repertoire of mRNAs and, together with other initiation factors, stimulates binding of mRNA and methionyl-tRNAi to the 40S ribosome. The eIF-3 complex specifically targets and initiates translation of a subset of mRNAs involved in cell proliferation. This chain is Eukaryotic translation initiation factor 3 subunit A (tif32), found in Aspergillus clavatus (strain ATCC 1007 / CBS 513.65 / DSM 816 / NCTC 3887 / NRRL 1 / QM 1276 / 107).